The chain runs to 361 residues: Deoxyhypusine hydroxylase (361 aa).

HEAT-like PBS-type repeat units follow at residues 59 to 85 (LKHE…VLEN), 94 to 120 (VRHE…YMQD), 183 to 211 (QRYR…GFRD), and 216 to 242 (FRHE…RLRD). Fe cation-binding residues include His61, Glu62, His96, and Glu97. Positions 218, 219, 251, and 252 each coordinate Fe cation.

It belongs to the deoxyhypusine hydroxylase family. Fe(2+) serves as cofactor.

The protein resides in the cytoplasm. It localises to the nucleus. It carries out the reaction [eIF5A protein]-deoxyhypusine + AH2 + O2 = [eIF5A protein]-hypusine + A + H2O. The protein operates within protein modification; eIF5A hypusination. Its function is as follows. Catalyzes the hydroxylation of the N(6)-(4-aminobutyl)-L-lysine intermediate to form hypusine, an essential post-translational modification only found in mature eIF-5A factor. The chain is Deoxyhypusine hydroxylase from Cryptococcus neoformans var. neoformans serotype D (strain B-3501A) (Filobasidiella neoformans).